A 273-amino-acid polypeptide reads, in one-letter code: Beta-lactamase OXA-23 (273 aa).

The first 17 residues, 1 to 17 (MNKYFTCYVVASLFLSG), serve as a signal peptide directing secretion. Catalysis depends on serine 79, which acts as the Acyl-ester intermediate. Residues serine 79, lysine 82, serine 126, threonine 217, tryptophan 219, and arginine 259 each contribute to the a beta-lactam site. Position 82 is an N6-carboxylysine (lysine 82).

It belongs to the class-D beta-lactamase family. Monomer. Carboxylated on the epsilon-amino group of a lysine, with the resulting carbamate functional group serving as a general base. Probably N-carboxylated at Lys-82 at neutral pH in vivo and undergoes complete N-decarboxylation, at pH 4.1, in vitro.

It localises to the periplasm. The enzyme catalyses a beta-lactam + H2O = a substituted beta-amino acid. With respect to regulation, inhibited by the desmethyl carbapenem, MA-1-206, via a covalent binding to Ser-79. In terms of biological role, class D beta-lactamase which confers resistance to the beta-lactam antibiotics, including ampicillin, and carbapenems such as imipenem and meropenem. Acts via hydrolysis of the beta-lactam ring. Has penicillin-, cephalosporin- and carbapenem-hydrolyzing activities, but lacks ceftazidime-hydrolyzing activity. In Acinetobacter baumannii, this protein is Beta-lactamase OXA-23.